Here is a 309-residue protein sequence, read N- to C-terminus: Methionyl-tRNA formyltransferase (309 aa).

109–112 contributes to the (6S)-5,6,7,8-tetrahydrofolate binding site; it reads SLLP.

It belongs to the Fmt family.

It catalyses the reaction L-methionyl-tRNA(fMet) + (6R)-10-formyltetrahydrofolate = N-formyl-L-methionyl-tRNA(fMet) + (6S)-5,6,7,8-tetrahydrofolate + H(+). Attaches a formyl group to the free amino group of methionyl-tRNA(fMet). The formyl group appears to play a dual role in the initiator identity of N-formylmethionyl-tRNA by promoting its recognition by IF2 and preventing the misappropriation of this tRNA by the elongation apparatus. The protein is Methionyl-tRNA formyltransferase of Clostridium novyi (strain NT).